Consider the following 319-residue polypeptide: ADP-L-glycero-D-manno-heptose-6-epimerase (319 aa).

NADP(+)-binding positions include 10–11, 31–32, lysine 38, lysine 53, and 79–83; these read FI, DD, and EGACS. The active-site Proton acceptor is tyrosine 144. Lysine 148 is an NADP(+) binding site. Residue asparagine 173 coordinates substrate. NADP(+)-binding residues include valine 174 and lysine 182. Lysine 182 (proton acceptor) is an active-site residue. Substrate is bound by residues serine 184, histidine 191, 205–208, arginine 218, and tyrosine 282; that span reads FEGC.

Belongs to the NAD(P)-dependent epimerase/dehydratase family. HldD subfamily. As to quaternary structure, homopentamer. NADP(+) is required as a cofactor.

It catalyses the reaction ADP-D-glycero-beta-D-manno-heptose = ADP-L-glycero-beta-D-manno-heptose. It functions in the pathway nucleotide-sugar biosynthesis; ADP-L-glycero-beta-D-manno-heptose biosynthesis; ADP-L-glycero-beta-D-manno-heptose from D-glycero-beta-D-manno-heptose 7-phosphate: step 4/4. Its function is as follows. Catalyzes the interconversion between ADP-D-glycero-beta-D-manno-heptose and ADP-L-glycero-beta-D-manno-heptose via an epimerization at carbon 6 of the heptose. The polypeptide is ADP-L-glycero-D-manno-heptose-6-epimerase (Aeromonas salmonicida (strain A449)).